The sequence spans 374 residues: Double homeobox protein 4C (374 aa).

A compositionally biased stretch (polar residues) spans 1-10 (MALPTPSDST). Disordered stretches follow at residues 1-24 (MALPTPSDSTLPAEARGRGRRRRL), 72-102 (SRQLRQHRRESRPWPGRRGPPEGRRKRTAVT), and 218-374 (LQPS…YELL). 2 consecutive DNA-binding regions (homeobox) follow at residues 19-78 (GRRR…LRQH) and 94-153 (GRRK…PGQG). Residues 265-274 (KSREDRDPQR) show a composition bias toward basic and acidic residues. Composition is skewed to low complexity over residues 278 to 302 (PGPCAVAQPGPAQAGPQGQGVLAPP) and 319 to 329 (AGAAWEPQAGA). Over residues 354 to 374 (QPLQEPGRSSTVTSSLLYELL) the composition is skewed to polar residues.

As to quaternary structure, may interact with MYF5; regulates MYF5 expression. In terms of tissue distribution, expressed in muscles, as well as in primary myoblasts and myotubes (at protein level).

The protein resides in the nucleus. Its subcellular location is the cytoplasm. Functionally, down-regulates MYOD1 expression and may up-regulate MYF5 expression. May regulate microRNA (miRNA) transcription, up-regulating the expression of some myogenic miRNAs, including MIR1-1, MIR133A2, MIR133B and MIR206. Impairs the differentiation of myoblasts and may be involved in muscle regeneration. Reduces DUX4-induced nuclear localization of CTNNB1/beta-catenin and its subsequent activation of target genes. The sequence is that of Double homeobox protein 4C (DUX4L9) from Homo sapiens (Human).